The sequence spans 302 residues: Sulfate adenylyltransferase subunit 2 (302 aa).

This sequence belongs to the PAPS reductase family. CysD subfamily. Heterodimer composed of CysD, the smaller subunit, and CysN.

The enzyme catalyses sulfate + ATP + H(+) = adenosine 5'-phosphosulfate + diphosphate. The protein operates within sulfur metabolism; hydrogen sulfide biosynthesis; sulfite from sulfate: step 1/3. Its function is as follows. With CysN forms the ATP sulfurylase (ATPS) that catalyzes the adenylation of sulfate producing adenosine 5'-phosphosulfate (APS) and diphosphate, the first enzymatic step in sulfur assimilation pathway. APS synthesis involves the formation of a high-energy phosphoric-sulfuric acid anhydride bond driven by GTP hydrolysis by CysN coupled to ATP hydrolysis by CysD. The chain is Sulfate adenylyltransferase subunit 2 from Salmonella arizonae (strain ATCC BAA-731 / CDC346-86 / RSK2980).